Here is a 115-residue protein sequence, read N- to C-terminus: Phosphoribosyl-ATP pyrophosphatase (115 aa).

Belongs to the PRA-PH family.

The protein resides in the cytoplasm. It carries out the reaction 1-(5-phospho-beta-D-ribosyl)-ATP + H2O = 1-(5-phospho-beta-D-ribosyl)-5'-AMP + diphosphate + H(+). It functions in the pathway amino-acid biosynthesis; L-histidine biosynthesis; L-histidine from 5-phospho-alpha-D-ribose 1-diphosphate: step 2/9. The polypeptide is Phosphoribosyl-ATP pyrophosphatase (Bordetella parapertussis (strain 12822 / ATCC BAA-587 / NCTC 13253)).